Here is a 146-residue protein sequence, read N- to C-terminus: MLKGIHPALSPELLKVLAEMGHGDEIVLSDAHFPAHQLHHKVIRADGIQIATLLEAITPLFEYDQYVERPLAMMQAVHGDSLDLAVEERYLAAIAKINGKAPLVERVERFAFYDRAKIAYAVVITGELAKYGNIILKKGVTPVLTD.

His22 (proton donor) is an active-site residue. Substrate contacts are provided by residues Asp30, Arg109, and 131–133 (YGN).

Belongs to the RbsD / FucU family. FucU mutarotase subfamily. As to quaternary structure, homodecamer.

Its subcellular location is the cytoplasm. The enzyme catalyses alpha-L-fucose = beta-L-fucose. It participates in carbohydrate metabolism; L-fucose metabolism. Its function is as follows. Involved in the anomeric conversion of L-fucose. This chain is L-fucose mutarotase, found in Glaesserella parasuis serovar 5 (strain SH0165) (Haemophilus parasuis).